A 431-amino-acid polypeptide reads, in one-letter code: Enolase (431 aa).

(2R)-2-phosphoglycerate is bound at residue glutamine 166. The active-site Proton donor is the glutamate 208. Positions 245, 288, and 315 each coordinate Mg(2+). (2R)-2-phosphoglycerate contacts are provided by lysine 340, arginine 369, serine 370, and lysine 391. The active-site Proton acceptor is the lysine 340.

Belongs to the enolase family. Mg(2+) is required as a cofactor.

The protein localises to the cytoplasm. The protein resides in the secreted. It localises to the cell surface. It carries out the reaction (2R)-2-phosphoglycerate = phosphoenolpyruvate + H2O. It functions in the pathway carbohydrate degradation; glycolysis; pyruvate from D-glyceraldehyde 3-phosphate: step 4/5. Catalyzes the reversible conversion of 2-phosphoglycerate (2-PG) into phosphoenolpyruvate (PEP). It is essential for the degradation of carbohydrates via glycolysis. In Clostridium acetobutylicum (strain ATCC 824 / DSM 792 / JCM 1419 / IAM 19013 / LMG 5710 / NBRC 13948 / NRRL B-527 / VKM B-1787 / 2291 / W), this protein is Enolase.